The primary structure comprises 252 residues: Segregation and condensation protein A (252 aa).

The interval 117 to 136 (EREEERQNAFTKPPSDLSEF) is disordered.

This sequence belongs to the ScpA family. As to quaternary structure, component of a cohesin-like complex composed of ScpA, ScpB and the Smc homodimer, in which ScpA and ScpB bind to the head domain of Smc. The presence of the three proteins is required for the association of the complex with DNA.

The protein localises to the cytoplasm. Functionally, participates in chromosomal partition during cell division. May act via the formation of a condensin-like complex containing Smc and ScpB that pull DNA away from mid-cell into both cell halves. The sequence is that of Segregation and condensation protein A from Bacillus pumilus (strain SAFR-032).